The primary structure comprises 182 residues: MKILDQKGKEFLLNSIRCINDFPKPGIVFRDITTLLNNKEAFNFLIDHLAARYEDANIDYIAGIESRGFIFGAALAARLRLPFVPIRKPKKLPFITLSQKYSLEYGVDEVQIHIDAFGEKAGARVLLMDDLIATGGTAKASVELINQTNATCVEACFLIDLVDLKGSEKLKSLTKIYSVLEV.

The protein belongs to the purine/pyrimidine phosphoribosyltransferase family. Homodimer.

It is found in the cytoplasm. The enzyme catalyses AMP + diphosphate = 5-phospho-alpha-D-ribose 1-diphosphate + adenine. It functions in the pathway purine metabolism; AMP biosynthesis via salvage pathway; AMP from adenine: step 1/1. Its function is as follows. Catalyzes a salvage reaction resulting in the formation of AMP, that is energically less costly than de novo synthesis. The polypeptide is Adenine phosphoribosyltransferase (Campylobacter concisus (strain 13826)).